The sequence spans 441 residues: Cortexillin-2 (441 aa).

The tract at residues Met-1–Ala-229 is actin-binding. 2 Calponin-homology (CH) domains span residues Lys-9 to Arg-117 and Lys-126 to Arg-231. Coiled-coil stretches lie at residues Ala-229–Leu-362 and Ser-406–Asn-430.

It belongs to the cortexillin family. Homodimer; parallel.

It localises to the cytoplasm. Its subcellular location is the cytoskeleton. In terms of biological role, actin-bundling protein. When linked to F-actin the actin filaments form preferentially anti-parallel bundles that associate into meshworks. Plays a major role in cytokinesis. Negatively regulates cortical localization of rapgap1. The sequence is that of Cortexillin-2 (ctxB) from Dictyostelium discoideum (Social amoeba).